The following is a 492-amino-acid chain: Catalase isozyme 1 (492 aa).

Active-site residues include His65 and Asn138. Tyr348 is a heme binding site.

It belongs to the catalase family. As to quaternary structure, homotetramer. The cofactor is heme.

It localises to the peroxisome. The enzyme catalyses 2 H2O2 = O2 + 2 H2O. Its function is as follows. Occurs in almost all aerobically respiring organisms and serves to protect cells from the toxic effects of hydrogen peroxide. This Gossypium hirsutum (Upland cotton) protein is Catalase isozyme 1 (CAT1).